The chain runs to 798 residues: Penicillin-binding protein 1A (798 aa).

Over 2 to 9 (IKKILTTC) the chain is Cytoplasmic. Residues 10-30 (FGLFFGFCVFGVGLVAIAILV) form a helical; Signal-anchor for type II membrane protein membrane-spanning segment. Over 31–798 (TYPKLPSLDS…SKQQQLDSLF (768 aa)) the chain is Periplasmic. The interval 50–218 (LTIYSADGEV…SAYNPIVNPE (169 aa)) is transglycosylase. Residue glutamate 88 is the Proton donor; for transglycosylase activity of the active site. The segment at 378–700 (RRALGFAARA…GTIAVPVWVD (323 aa)) is transpeptidase. Serine 461 acts as the Acyl-ester intermediate; for transpeptidase activity in catalysis. Positions 739-798 (LMLDNSGIAPQPSRRAKEDDEAAVENEQQGRSDETRQDVQETPVLPSNTDSKQQQLDSLF) are disordered. Residues 766–777 (QQGRSDETRQDV) show a composition bias toward basic and acidic residues. Over residues 783–798 (LPSNTDSKQQQLDSLF) the composition is skewed to polar residues.

In the N-terminal section; belongs to the glycosyltransferase 51 family. It in the C-terminal section; belongs to the transpeptidase family.

Its subcellular location is the cell inner membrane. It catalyses the reaction [GlcNAc-(1-&gt;4)-Mur2Ac(oyl-L-Ala-gamma-D-Glu-L-Lys-D-Ala-D-Ala)](n)-di-trans,octa-cis-undecaprenyl diphosphate + beta-D-GlcNAc-(1-&gt;4)-Mur2Ac(oyl-L-Ala-gamma-D-Glu-L-Lys-D-Ala-D-Ala)-di-trans,octa-cis-undecaprenyl diphosphate = [GlcNAc-(1-&gt;4)-Mur2Ac(oyl-L-Ala-gamma-D-Glu-L-Lys-D-Ala-D-Ala)](n+1)-di-trans,octa-cis-undecaprenyl diphosphate + di-trans,octa-cis-undecaprenyl diphosphate + H(+). The catalysed reaction is Preferential cleavage: (Ac)2-L-Lys-D-Ala-|-D-Ala. Also transpeptidation of peptidyl-alanyl moieties that are N-acyl substituents of D-alanine.. Its pathway is cell wall biogenesis; peptidoglycan biosynthesis. In terms of biological role, cell wall formation. Synthesis of cross-linked peptidoglycan from the lipid intermediates. The enzyme has a penicillin-insensitive transglycosylase N-terminal domain (formation of linear glycan strands) and a penicillin-sensitive transpeptidase C-terminal domain (cross-linking of the peptide subunits). Essential for cell wall synthesis. In Neisseria gonorrhoeae (strain ATCC 700825 / FA 1090), this protein is Penicillin-binding protein 1A (mrcA).